The sequence spans 317 residues: Acetyl-coenzyme A carboxylase carboxyl transferase subunit alpha (317 aa).

Residues 40–293 (LEGRVRDAMV…EAVIGDALKE (254 aa)) enclose the CoA carboxyltransferase C-terminal domain.

Belongs to the AccA family. In terms of assembly, acetyl-CoA carboxylase is a heterohexamer composed of biotin carboxyl carrier protein (AccB), biotin carboxylase (AccC) and two subunits each of ACCase subunit alpha (AccA) and ACCase subunit beta (AccD).

It localises to the cytoplasm. The catalysed reaction is N(6)-carboxybiotinyl-L-lysyl-[protein] + acetyl-CoA = N(6)-biotinyl-L-lysyl-[protein] + malonyl-CoA. It functions in the pathway lipid metabolism; malonyl-CoA biosynthesis; malonyl-CoA from acetyl-CoA: step 1/1. Its function is as follows. Component of the acetyl coenzyme A carboxylase (ACC) complex. First, biotin carboxylase catalyzes the carboxylation of biotin on its carrier protein (BCCP) and then the CO(2) group is transferred by the carboxyltransferase to acetyl-CoA to form malonyl-CoA. This Sinorhizobium medicae (strain WSM419) (Ensifer medicae) protein is Acetyl-coenzyme A carboxylase carboxyl transferase subunit alpha.